Here is a 386-residue protein sequence, read N- to C-terminus: Sulfate adenylyltransferase (386 aa).

Belongs to the sulfate adenylyltransferase family.

The enzyme catalyses sulfate + ATP + H(+) = adenosine 5'-phosphosulfate + diphosphate. It participates in sulfur metabolism; hydrogen sulfide biosynthesis; sulfite from sulfate: step 1/3. In Persephonella marina (strain DSM 14350 / EX-H1), this protein is Sulfate adenylyltransferase.